Reading from the N-terminus, the 190-residue chain is Protein A52 (190 aa).

The protein belongs to the orthopoxvirus A52R protein family. Interacts with host TRAF6 and IRAK2.

In terms of biological role, bcl-2-like protein which targets host toll-like receptor signaling complexes to suppress innate immune response. Interacts with host TRAF6 to activate p38 and subsequently induce the expression of several cytokines such as IL-10. Also associates with host IRAK2 to inhibit NF-kappa-B signaling. This chain is Protein A52, found in Vaccinia virus (strain Western Reserve) (VACV).